The sequence spans 124 residues: Small ribosomal subunit protein uS12 (124 aa).

Asp-89 bears the 3-methylthioaspartic acid mark. Positions 104-124 (LQGVKDRKQSRSKYGAKRPKK) are disordered. The span at 113–124 (SRSKYGAKRPKK) shows a compositional bias: basic residues.

The protein belongs to the universal ribosomal protein uS12 family. In terms of assembly, part of the 30S ribosomal subunit. Contacts proteins S8 and S17. May interact with IF1 in the 30S initiation complex.

In terms of biological role, with S4 and S5 plays an important role in translational accuracy. Functionally, interacts with and stabilizes bases of the 16S rRNA that are involved in tRNA selection in the A site and with the mRNA backbone. Located at the interface of the 30S and 50S subunits, it traverses the body of the 30S subunit contacting proteins on the other side and probably holding the rRNA structure together. The combined cluster of proteins S8, S12 and S17 appears to hold together the shoulder and platform of the 30S subunit. This Thiomonas delicata (Thiomonas cuprina) protein is Small ribosomal subunit protein uS12.